The sequence spans 460 residues: Cysteine--tRNA ligase (460 aa).

C29 contacts Zn(2+). Residues 31–41 (MTIYDLCHIGH) carry the 'HIGH' region motif. Positions 213, 238, and 242 each coordinate Zn(2+). The 'KMSKS' region motif lies at 270–274 (KMSKS). K273 contacts ATP.

It belongs to the class-I aminoacyl-tRNA synthetase family. In terms of assembly, monomer. It depends on Zn(2+) as a cofactor.

Its subcellular location is the cytoplasm. The catalysed reaction is tRNA(Cys) + L-cysteine + ATP = L-cysteinyl-tRNA(Cys) + AMP + diphosphate. The protein is Cysteine--tRNA ligase of Verminephrobacter eiseniae (strain EF01-2).